Here is a 754-residue protein sequence, read N- to C-terminus: RNA exonuclease 5 (754 aa).

Residues 1 to 36 form a disordered region; that stretch reads MELEEEENPRKRKETPNSALTTELDRPSWDVQDPEP. An Exonuclease domain is found at 222–370; the sequence is LFGLDCEVCL…EDARTALELV (149 aa). 2 RRM domains span residues 488–562 and 583–662; these read STIY…RLLT and GTIY…RHLQ.

This is RNA exonuclease 5 (Rexo5) from Rattus norvegicus (Rat).